We begin with the raw amino-acid sequence, 421 residues long: MDLENKVKKMGLGHEQGFGAPCLKCKEKCEGFELHFWRKICRNCKCGQEEHDVLLSNEEDRKVGKLFEDTKYTTLIAKLKSDGIPMYKRNVMILTNPVAAKKNVSINTVTYEWAPPVHNQALARQYMQMLPKEKQPVAGSEGAQYRKKQLAKQLPAHDQDPSKCHELSPREVKEMEQFVKKYKSEALGVGDVKLPCEMDAQGPKQIYIPGGDRSTPPAVGAMEDKSAEHKSTQYSCYCCKLSMKEGDPAIYAERAGYDKLWHPACFVCSICHELLVDMIYFWKNEKLYCGRHYCDSEKPRCAGCDELIFSNEYTQAENQNWHLKHFCCFDCDSILAGEIYVMVSDKPVCKPCYVKNHAVVCQGCHNAIDPEVQRVTYNNFSWHASTECFLCSCCSKCLIGQKFMPVEGMVFCSVECKKMMS.

The 108-residue stretch at 92–199 (MILTNPVAAK…GDVKLPCEMD (108 aa)) folds into the PET domain. The interval 133-164 (EKQPVAGSEGAQYRKKQLAKQLPAHDQDPSKC) is disordered. Over residues 155–164 (PAHDQDPSKC) the composition is skewed to basic and acidic residues. LIM zinc-binding domains are found at residues 234 to 297 (YSCY…CDSE), 299 to 359 (PRCA…NHAV), and 362 to 421 (QGCH…KMMS).

It belongs to the prickle / espinas / testin family. As to quaternary structure, interacts via LIM domain 1 with ZYX. Interacts (via LIM domain 3) with ENAH and VASP. Interacts with ALKBH4, talin, actin, alpha-actinin, GRIP1 and PXN. Interacts (via LIM domain 2) with ACTL7A (via N-terminus). Heterodimer with ACTL7A; the heterodimer interacts with ENAH to form a heterotrimer.

It is found in the cytoplasm. The protein localises to the cell junction. It localises to the focal adhesion. In terms of biological role, scaffold protein that may play a role in cell adhesion, cell spreading and in the reorganization of the actin cytoskeleton. Plays a role in the regulation of cell proliferation. May act as a tumor suppressor. The polypeptide is Testin (TES) (Ateles geoffroyi (Black-handed spider monkey)).